The chain runs to 420 residues: CinA-like protein (420 aa).

Belongs to the CinA family.

In Geotalea uraniireducens (strain Rf4) (Geobacter uraniireducens), this protein is CinA-like protein.